Reading from the N-terminus, the 328-residue chain is 7,8-didemethyl-8-hydroxy-5-deazariboflavin synthase (328 aa).

A Radical SAM core domain is found at 1–242 (MTYSRNIFIP…PDVSIQVPPN (242 aa)). 3 residues coordinate [4Fe-4S] cluster: Cys15, Cys19, and Cys22.

Belongs to the radical SAM superfamily. CofG family. In terms of assembly, consists of two subunits, CofG and CofH. [4Fe-4S] cluster serves as cofactor.

The enzyme catalyses 5-amino-5-(4-hydroxybenzyl)-6-(D-ribitylimino)-5,6-dihydrouracil + S-adenosyl-L-methionine = 7,8-didemethyl-8-hydroxy-5-deazariboflavin + 5'-deoxyadenosine + L-methionine + NH4(+) + H(+). The protein operates within cofactor biosynthesis; coenzyme F0 biosynthesis. In terms of biological role, catalyzes the radical-mediated synthesis of 7,8-didemethyl-8-hydroxy-5-deazariboflavin from 5-amino-5-(4-hydroxybenzyl)-6-(D-ribitylimino)-5,6-dihydrouracil. The polypeptide is 7,8-didemethyl-8-hydroxy-5-deazariboflavin synthase (Methanothermobacter thermautotrophicus (strain ATCC 29096 / DSM 1053 / JCM 10044 / NBRC 100330 / Delta H) (Methanobacterium thermoautotrophicum)).